We begin with the raw amino-acid sequence, 886 residues long: Valine--tRNA ligase (886 aa).

The short motif at 43–53 is the 'HIGH' region element; sequence PYPTGRMHLGH. A 'KMSKS' region motif is present at residues 528 to 532; that stretch reads KMSKS. Residue Lys-531 coordinates ATP.

The protein belongs to the class-I aminoacyl-tRNA synthetase family. ValS type 2 subfamily.

The protein localises to the cytoplasm. It carries out the reaction tRNA(Val) + L-valine + ATP = L-valyl-tRNA(Val) + AMP + diphosphate. Its function is as follows. Catalyzes the attachment of valine to tRNA(Val). As ValRS can inadvertently accommodate and process structurally similar amino acids such as threonine, to avoid such errors, it has a 'posttransfer' editing activity that hydrolyzes mischarged Thr-tRNA(Val) in a tRNA-dependent manner. This Methanococcus maripaludis (strain DSM 14266 / JCM 13030 / NBRC 101832 / S2 / LL) protein is Valine--tRNA ligase.